The sequence spans 208 residues: Potassium-transporting ATPase KdpC subunit (208 aa).

The chain crosses the membrane as a helical span at residues 6–26 (PALLVSIVLLVVCGLVYPLVL).

It belongs to the KdpC family. The system is composed of three essential subunits: KdpA, KdpB and KdpC.

The protein localises to the cell membrane. Part of the high-affinity ATP-driven potassium transport (or Kdp) system, which catalyzes the hydrolysis of ATP coupled with the electrogenic transport of potassium into the cytoplasm. This subunit acts as a catalytic chaperone that increases the ATP-binding affinity of the ATP-hydrolyzing subunit KdpB by the formation of a transient KdpB/KdpC/ATP ternary complex. The polypeptide is Potassium-transporting ATPase KdpC subunit (Clostridioides difficile (strain 630) (Peptoclostridium difficile)).